Here is a 389-residue protein sequence, read N- to C-terminus: Spore coat polysaccharide biosynthesis protein SpsC (389 aa).

Residue Lys-187 is modified to N6-(pyridoxal phosphate)lysine.

It belongs to the DegT/DnrJ/EryC1 family. Requires pyridoxal 5'-phosphate as cofactor.

Its pathway is spore coat biogenesis; spore coat polysaccharide biosynthesis. The protein is Spore coat polysaccharide biosynthesis protein SpsC (spsC) of Bacillus subtilis (strain 168).